The primary structure comprises 92 residues: Small ribosomal subunit protein uS19 (92 aa).

It belongs to the universal ribosomal protein uS19 family.

Functionally, protein S19 forms a complex with S13 that binds strongly to the 16S ribosomal RNA. The chain is Small ribosomal subunit protein uS19 from Thermosynechococcus vestitus (strain NIES-2133 / IAM M-273 / BP-1).